Consider the following 74-residue polypeptide: Conotoxin AbVIL (74 aa).

The N-terminal stretch at valine 1–alanine 17 is a signal peptide. Positions alanine 17–lysine 41 are disordered. The propeptide occupies glutamate 18–threonine 40. A compositionally biased stretch (basic and acidic residues) spans serine 21–serine 37. 3 disulfides stabilise this stretch: cysteine 43/cysteine 57, cysteine 50/cysteine 61, and cysteine 56/cysteine 68.

The protein belongs to the conotoxin O1 superfamily. Expressed by the venom duct.

It localises to the secreted. The sequence is that of Conotoxin AbVIL from Conus abbreviatus (Abbreviated cone).